The chain runs to 50 residues: Small ribosomal subunit protein uS14 (50 aa).

4 residues coordinate Zn(2+): Cys15, Cys18, Cys33, and Cys36.

The protein belongs to the universal ribosomal protein uS14 family. Zinc-binding uS14 subfamily. As to quaternary structure, part of the 30S ribosomal subunit. It depends on Zn(2+) as a cofactor.

Binds 16S rRNA, required for the assembly of 30S particles. The chain is Small ribosomal subunit protein uS14 from Methanosarcina mazei (strain ATCC BAA-159 / DSM 3647 / Goe1 / Go1 / JCM 11833 / OCM 88) (Methanosarcina frisia).